A 244-amino-acid polypeptide reads, in one-letter code: Triosephosphate isomerase (244 aa).

Residue 9 to 11 (NWK) participates in substrate binding. His-93 functions as the Electrophile in the catalytic mechanism. Glu-160 serves as the catalytic Proton acceptor. Positions 166 and 206 each coordinate substrate.

It belongs to the triosephosphate isomerase family. In terms of assembly, homodimer.

It is found in the cytoplasm. The catalysed reaction is D-glyceraldehyde 3-phosphate = dihydroxyacetone phosphate. The protein operates within carbohydrate biosynthesis; gluconeogenesis. Its pathway is carbohydrate degradation; glycolysis; D-glyceraldehyde 3-phosphate from glycerone phosphate: step 1/1. Its function is as follows. Involved in the gluconeogenesis. Catalyzes stereospecifically the conversion of dihydroxyacetone phosphate (DHAP) to D-glyceraldehyde-3-phosphate (G3P). This Mycoplasma pneumoniae (strain ATCC 29342 / M129 / Subtype 1) (Mycoplasmoides pneumoniae) protein is Triosephosphate isomerase.